A 541-amino-acid chain; its full sequence is Chaperonin GroEL (541 aa).

Residues 29-32 (TAGP), K50, 86-90 (DGTTT), G416, and D498 contribute to the ATP site.

It belongs to the chaperonin (HSP60) family. Forms a cylinder of 14 subunits composed of two heptameric rings stacked back-to-back. Interacts with the co-chaperonin GroES.

The protein localises to the cytoplasm. It carries out the reaction ATP + H2O + a folded polypeptide = ADP + phosphate + an unfolded polypeptide.. Functionally, together with its co-chaperonin GroES, plays an essential role in assisting protein folding. The GroEL-GroES system forms a nano-cage that allows encapsulation of the non-native substrate proteins and provides a physical environment optimized to promote and accelerate protein folding. This is Chaperonin GroEL from Anaplasma phagocytophilum (Ehrlichia phagocytophila).